We begin with the raw amino-acid sequence, 30 residues long: Thylakoid lumenal 17 kDa protein (30 aa).

The protein localises to the plastid. Its subcellular location is the chloroplast thylakoid lumen. The sequence is that of Thylakoid lumenal 17 kDa protein from Spinacia oleracea (Spinach).